We begin with the raw amino-acid sequence, 188 residues long: RWD domain-containing protein 4 (188 aa).

Residues 9–111 (MELEALRSIY…EYAKDNKEQF (103 aa)) enclose the RWD domain. The interval 132 to 167 (TPSAAPSSKKKDKKEQLSKAQKRKLADKTDHKGELP) is disordered. Basic and acidic residues predominate over residues 155 to 166 (KLADKTDHKGEL).

This is RWD domain-containing protein 4 (Rwdd4) from Rattus norvegicus (Rat).